The chain runs to 448 residues: UDP-N-acetylmuramoylalanine--D-glutamate ligase (448 aa).

112 to 118 (GSNAKST) lines the ATP pocket.

It belongs to the MurCDEF family.

It is found in the cytoplasm. The catalysed reaction is UDP-N-acetyl-alpha-D-muramoyl-L-alanine + D-glutamate + ATP = UDP-N-acetyl-alpha-D-muramoyl-L-alanyl-D-glutamate + ADP + phosphate + H(+). It participates in cell wall biogenesis; peptidoglycan biosynthesis. In terms of biological role, cell wall formation. Catalyzes the addition of glutamate to the nucleotide precursor UDP-N-acetylmuramoyl-L-alanine (UMA). In Acinetobacter baumannii (strain AB307-0294), this protein is UDP-N-acetylmuramoylalanine--D-glutamate ligase.